The following is a 451-amino-acid chain: tRNA-2-methylthio-N(6)-dimethylallyladenosine synthase (451 aa).

An MTTase N-terminal domain is found at 6-122; that stretch reads RRYHIITFGC…LDQLLEQVWA (117 aa). [4Fe-4S] cluster is bound by residues Cys-15, Cys-51, Cys-85, Cys-157, Cys-161, and Cys-164. The region spanning 143-384 is the Radical SAM core domain; it reads RESTVSAWVN…STQAMERSQR (242 aa). Residues 383–447 form the TRAM domain; sequence QRYLGRVEEV…AFSLTGEALS (65 aa).

The protein belongs to the methylthiotransferase family. MiaB subfamily. In terms of assembly, monomer. [4Fe-4S] cluster is required as a cofactor.

The protein localises to the cytoplasm. It carries out the reaction N(6)-dimethylallyladenosine(37) in tRNA + (sulfur carrier)-SH + AH2 + 2 S-adenosyl-L-methionine = 2-methylsulfanyl-N(6)-dimethylallyladenosine(37) in tRNA + (sulfur carrier)-H + 5'-deoxyadenosine + L-methionine + A + S-adenosyl-L-homocysteine + 2 H(+). Functionally, catalyzes the methylthiolation of N6-(dimethylallyl)adenosine (i(6)A), leading to the formation of 2-methylthio-N6-(dimethylallyl)adenosine (ms(2)i(6)A) at position 37 in tRNAs that read codons beginning with uridine. This Synechocystis sp. (strain ATCC 27184 / PCC 6803 / Kazusa) protein is tRNA-2-methylthio-N(6)-dimethylallyladenosine synthase.